We begin with the raw amino-acid sequence, 184 residues long: Nutrient stress-induced DNA-binding protein (184 aa).

Belongs to the Dps family. As to quaternary structure, hexamer.

In terms of biological role, involved in protection of chromosomal DNA from damage under nutrient-limited and oxidative stress conditions. Binds heme. This is Nutrient stress-induced DNA-binding protein (dpsA) from Nostoc sp. (strain PCC 7120 / SAG 25.82 / UTEX 2576).